A 231-amino-acid polypeptide reads, in one-letter code: Large ribosomal subunit protein uL1 (231 aa).

Belongs to the universal ribosomal protein uL1 family. In terms of assembly, part of the 50S ribosomal subunit.

Its function is as follows. Binds directly to 23S rRNA. The L1 stalk is quite mobile in the ribosome, and is involved in E site tRNA release. In terms of biological role, protein L1 is also a translational repressor protein, it controls the translation of the L11 operon by binding to its mRNA. The protein is Large ribosomal subunit protein uL1 of Moorella thermoacetica (strain ATCC 39073 / JCM 9320).